Here is a 190-residue protein sequence, read N- to C-terminus: Nucleoside triphosphate pyrophosphatase (190 aa).

Aspartate 69 (proton acceptor) is an active-site residue.

This sequence belongs to the Maf family. Requires a divalent metal cation as cofactor.

The protein localises to the cytoplasm. It catalyses the reaction a ribonucleoside 5'-triphosphate + H2O = a ribonucleoside 5'-phosphate + diphosphate + H(+). The catalysed reaction is a 2'-deoxyribonucleoside 5'-triphosphate + H2O = a 2'-deoxyribonucleoside 5'-phosphate + diphosphate + H(+). Functionally, nucleoside triphosphate pyrophosphatase. May have a dual role in cell division arrest and in preventing the incorporation of modified nucleotides into cellular nucleic acids. In Helicobacter pylori (strain P12), this protein is Nucleoside triphosphate pyrophosphatase.